Reading from the N-terminus, the 406-residue chain is ATP synthase subunit a (406 aa).

Composition is skewed to low complexity over residues 22–31 (AGEHGAPAPE) and 43–59 (DAAG…AEHG). Residues 22–76 (AGEHGAPAPEVATPAEGHGARDAAGAATDPHGAAAEHGAAAHEDPAQHGAAGAEA) form a disordered region. 6 helical membrane-spanning segments follow: residues 151 to 171 (KHVV…FAAV), 209 to 229 (FVPY…FGLV), 232 to 252 (AATA…TFLI), 278 to 298 (LWPL…TKPF), 304 to 324 (LFAN…LIFA), and 351 to 371 (VQAY…VAHH). The tract at residues 375-406 (DEHEEHGHGAAATGGAHGSHGSHVAGASPGHG) is disordered. Positions 383 to 406 (GAAATGGAHGSHGSHVAGASPGHG) are enriched in low complexity.

It belongs to the ATPase A chain family. F-type ATPases have 2 components, CF(1) - the catalytic core - and CF(0) - the membrane proton channel. CF(1) has five subunits: alpha(3), beta(3), gamma(1), delta(1), epsilon(1). CF(0) has three main subunits: a(1), b(2) and c(9-12). The alpha and beta chains form an alternating ring which encloses part of the gamma chain. CF(1) is attached to CF(0) by a central stalk formed by the gamma and epsilon chains, while a peripheral stalk is formed by the delta and b chains.

The protein resides in the cell inner membrane. Functionally, key component of the proton channel; it plays a direct role in the translocation of protons across the membrane. This chain is ATP synthase subunit a, found in Anaeromyxobacter sp. (strain Fw109-5).